The primary structure comprises 290 residues: ATP synthase gamma chain (290 aa).

This sequence belongs to the ATPase gamma chain family. F-type ATPases have 2 components, CF(1) - the catalytic core - and CF(0) - the membrane proton channel. CF(1) has five subunits: alpha(3), beta(3), gamma(1), delta(1), epsilon(1). CF(0) has four main subunits: a, b, b' and c.

Its subcellular location is the cellular chromatophore membrane. Produces ATP from ADP in the presence of a proton gradient across the membrane. The gamma chain is believed to be important in regulating ATPase activity and the flow of protons through the CF(0) complex. The polypeptide is ATP synthase gamma chain (Rhodobacter capsulatus (Rhodopseudomonas capsulata)).